We begin with the raw amino-acid sequence, 559 residues long: DDB1- and CUL4-associated factor 10 (559 aa).

The disordered stretch occupies residues 1-119 (MFPFGPHSPG…HGLGAGLGGP (119 aa)). Phosphoserine occurs at positions 53, 63, 89, and 92. Positions 56 to 86 (RPGAPSLSPAPRSGELGLPGAPESSTASAPG) are enriched in low complexity. Positions 87-97 (EPSPPSPPCRR) are enriched in pro residues. Arginine 134 is modified (omega-N-methylarginine). WD repeat units lie at residues 166–205 (RTHG…HIKT), 209–247 (AHED…TKVC), 251–290 (GHTS…EDGC), and 296–335 (FHTR…KSLE). The residue at position 349 (serine 349) is a Phosphoserine. The segment covering 350 to 367 (SSDLTTSSSSSGPRVSGS) has biased composition (low complexity). The segment at 350–396 (SSDLTTSSSSSGPRVSGSPCHHSDSNSSEKHMSRASQREGVSPRNSL) is disordered. Positions 370-381 (HHSDSNSSEKHM) are enriched in basic and acidic residues. WD repeat units lie at residues 408–448 (DHGN…QEGA), 470–508 (VGRG…SELV), and 526–559 (SHND…QPKF).

It belongs to the WD repeat DCAF10 family. In terms of assembly, interacts with DDB1.

It participates in protein modification; protein ubiquitination. In terms of biological role, may function as a substrate receptor for CUL4-DDB1 E3 ubiquitin-protein ligase complex. In Homo sapiens (Human), this protein is DDB1- and CUL4-associated factor 10 (DCAF10).